Here is a 149-residue protein sequence, read N- to C-terminus: Internal scaffolding protein ORF3 (149 aa).

It belongs to the microvidae B protein family.

The protein resides in the host cytoplasm. In terms of biological role, participates in the assembly of the viral procapsid in the cytoplasm. Released from the procapsid upon genome packaging, possibly through affinity displacement by the protein ORF8, or by proteolysis. The sequence is that of Internal scaffolding protein ORF3 from Spiroplasma virus 4 (SpV4).